The following is a 166-amino-acid chain: MAIKLEDKKAIVAEVNEAAKAALSAVVADARGVTVGAMTGLRKEAREAGVYVRVVRNTLLKRAVEGTQYDVLNDAFVGPTLIAFSKEHPGAAARIFKEFAKGQEKFEIKAAAFEGKYLAANEIDVLASLPTRDEAIAKLMSVIQGATSKLARTLAAIRDQKEAAAA.

It belongs to the universal ribosomal protein uL10 family. In terms of assembly, part of the ribosomal stalk of the 50S ribosomal subunit. The N-terminus interacts with L11 and the large rRNA to form the base of the stalk. The C-terminus forms an elongated spine to which L12 dimers bind in a sequential fashion forming a multimeric L10(L12)X complex.

In terms of biological role, forms part of the ribosomal stalk, playing a central role in the interaction of the ribosome with GTP-bound translation factors. This is Large ribosomal subunit protein uL10 from Pseudomonas fluorescens (strain ATCC BAA-477 / NRRL B-23932 / Pf-5).